The primary structure comprises 1705 residues: Rho guanine nucleotide exchange factor 28 (1705 aa).

Disordered stretches follow at residues 287 to 316 and 473 to 524; these read RPEE…SAAE and KKRS…ETNT. Phosphoserine is present on residues serine 313 and serine 478. Over residues 501–510 the composition is skewed to polar residues; sequence PGSQSSSRTG. A Phosphoserine modification is found at serine 624. The interval 630–649 is disordered; it reads MTSPRNKSKTKSKDAKDKEK. Basic and acidic residues predominate over residues 640 to 649; sequence KSKDAKDKEK. The Phorbol-ester/DAG-type zinc-finger motif lies at 652-699; the sequence is RHQFAPGTFSGVLQCLVCDKTLLGKESLQCSNCNANVHKGCKDAAPAC. Composition is skewed to polar residues over residues 710-721 and 759-775; these read NKPQTILGNSSF and VPGT…TSLE. Residues 710-800 are disordered; that stretch reads NKPQTILGNS…ELLQSMGSSP (91 aa). Basic and acidic residues predominate over residues 777-791; that stretch reads ESDHNSCRSRSHSDE. Residues 849–1044 enclose the DH domain; that stretch reads KRQDVIFELM…KDMIATVDLK (196 aa). The 103-residue stretch at 1086–1188 folds into the PH domain; sequence TLLYDGLVYW…WMRRIQQAVE (103 aa). Residues 1187–1207 form a disordered region; that stretch reads VESCPEEKGGRTSESDEDKRK. Basic and acidic residues predominate over residues 1191-1207; sequence PEEKGGRTSESDEDKRK. The interval 1295–1304 is interaction with PTK2/FAK1; required for regulation of axonal branching and synapse formation; the sequence is AVSQSCEDSC. A disordered region spans residues 1312–1339; it reads TLSSHDVPGSPTASLVTGGREGRGCSDV. The mediates cytoplasmic retention and interaction with YWHAH stretch occupies residues 1372–1383; the sequence is IIQAIQNLTRLL. The tract at residues 1425–1705 is interaction with microtubules; the sequence is QKSRDADRQH…DGAKENIVYL (281 aa). A coiled-coil region spans residues 1488–1525; it reads RSRGELDLQLQEYQHSLERLREGQRLVEREQARMRAQQ. Residues 1496–1527 form an RNA-binding region; the sequence is QLQEYQHSLERLREGQRLVEREQARMRAQQSL. Position 1538 is a phosphoserine (serine 1538). The mediates cytoplasmic retention and interaction with MAPK8IP1 stretch occupies residues 1566-1579; it reads FINEALVQMSFNTF. Residues 1638–1705 form a disordered region; the sequence is PFHESSKDSC…DGAKENIVYL (68 aa). A compositionally biased stretch (basic and acidic residues) spans 1641-1655; sequence ESSKDSCKNDLDTSH. Over residues 1656-1669 the composition is skewed to polar residues; the sequence is TESPTPHDSNSHRP. The span at 1688–1699 shows a compositional bias: basic and acidic residues; it reads TRQDGETGDGAK.

Homooligomer; forms cytoplasmic aggregates. Forms a complex with MAPK8 and MAPK8IP1. Interacts with RHOA. Interacts with microtubules. Interacts with YWHAE and YWHAH. Interacts with PTK2/FAK1. Interacts with NEFL. Interacts with CTNND2; prevents interaction with RHOA. Post-translationally, phosphorylated on tyrosine upon stimulation of cells by laminin.

It is found in the cytoplasm. Its subcellular location is the cell membrane. Functions as a RHOA-specific guanine nucleotide exchange factor regulating signaling pathways downstream of integrins and growth factor receptors. Functions in axonal branching, synapse formation and dendritic morphogenesis. Also functions in focal adhesion formation, cell motility and B-lymphocytes activation. May regulate NEFL expression and aggregation and play a role in apoptosis. This chain is Rho guanine nucleotide exchange factor 28 (ARHGEF28), found in Homo sapiens (Human).